Consider the following 258-residue polypeptide: Flagellar brake protein YcgR (258 aa).

The PilZ domain maps to 131–248 (QKREYYRVAT…ALSLIQRYIT (118 aa)).

Belongs to the YcgR family. Monomer. Interacts with the flagellar basal bodies.

The protein localises to the bacterial flagellum basal body. In terms of biological role, acts as a flagellar brake, regulating swimming and swarming in a bis-(3'-5') cyclic diguanylic acid (c-di-GMP)-dependent manner. Binds 1 c-di-GMP dimer per subunit. Increasing levels of c-di-GMP lead to decreased motility. This chain is Flagellar brake protein YcgR, found in Nitrosospira multiformis (strain ATCC 25196 / NCIMB 11849 / C 71).